A 124-amino-acid polypeptide reads, in one-letter code: Ragulator complex protein LAMTOR3 homolog (124 aa).

Belongs to the LAMTOR3 family. As to quaternary structure, part of the Ragulator complex composed of Lamtor3, Lamtor2, CG14184, CG14812, and Lamtor4.

Its function is as follows. Regulator of the TOR pathway, a signaling cascade that promotes cell growth in response to growth factors, energy levels, and amino acids. As part of the Ragulator complex, may activate the TOR signaling cascade in response to amino acids. The protein is Ragulator complex protein LAMTOR3 homolog of Drosophila melanogaster (Fruit fly).